The sequence spans 701 residues: MHHIVEVDLGDRKITLETGKMAKQANGAVVVRSGDAVVLVTACMADQPKPSAGFFPLTVDYREYTYAAGKIPGGFIKREGRLSEKEVLTCRLIDRPIRPLFPEGFMNETQIIAMVLSADPEQDPNSLAIVGTAAALAISDIPFQYVMAGVRVGMRDGQYTANPTYTEGRASKLNIVVAGTEEGIVMVEAGAQEVSEAEVLGAIEFGHECCKKIAAGIRQLMKLCGKTKREFVSPVLDETIYAEVEKQARVDLTDALNTEKHEKLASYALVASVKKRTIEALPDEQKEQGAKCFDALKERIFRDDMLKKHRRPDGREFDQIRQITIETGVLPRVHGSTLFTRGETQALVTVTLGTKDDEQRIELLEPGEASKRFMLHYNFPPFSVGEVGFMRGAGRREIGHGALAERALTALIPGEDKFPYTMRVVSDTLESNGSSSMAAICGGSLALMQAGVPMTAHVGGVAMGLVMEGKDYAILTDIAGAEDHYGDMDFKVAGTRDGITGMQMDIKVPNITTAIMKEALEQARRGRLFILDKMYEAMPQANTAISQYAPRIYTLHIPTDKIRDVIGPGGKVIRGIIEQTGVKIDVEDDGTIHVASADEASANKAIQIISDLTATAEIGKTYLGKVVRLVDFGAFVEIFPGTDGLLHISEIAENRIKDVRDELKEGDQILVKCLALEGNKIKLSRKAVLKEQREKMKQGKE.

The Mg(2+) site is built by Asp483 and Asp489. One can recognise a KH domain in the interval 550–609 (PRIYTLHIPTDKIRDVIGPGGKVIRGIIEQTGVKIDVEDDGTIHVASADEASANKAIQII). The 68-residue stretch at 619-686 (GKTYLGKVVR…EGNKIKLSRK (68 aa)) folds into the S1 motif domain.

This sequence belongs to the polyribonucleotide nucleotidyltransferase family. Requires Mg(2+) as cofactor.

The protein resides in the cytoplasm. It carries out the reaction RNA(n+1) + phosphate = RNA(n) + a ribonucleoside 5'-diphosphate. Involved in mRNA degradation. Catalyzes the phosphorolysis of single-stranded polyribonucleotides processively in the 3'- to 5'-direction. The polypeptide is Polyribonucleotide nucleotidyltransferase (Solibacter usitatus (strain Ellin6076)).